The sequence spans 110 residues: MSKKIITGKVVSNAMDKTITVETDRLTKHPKYHKFVRKTRRYHAHDENNECEIGDIVEIEESRKLSKTKAFVLKRIVRKNILSEEVETPDSVEEELKEAFGGEVDGTTRE.

This sequence belongs to the universal ribosomal protein uS17 family. In terms of assembly, part of the 30S ribosomal subunit.

Functionally, one of the primary rRNA binding proteins, it binds specifically to the 5'-end of 16S ribosomal RNA. In Petrotoga mobilis (strain DSM 10674 / SJ95), this protein is Small ribosomal subunit protein uS17.